Here is a 316-residue protein sequence, read N- to C-terminus: LIM/homeobox protein lim-6 (316 aa).

2 LIM zinc-binding domains span residues 40 to 101 and 102 to 163; these read KLCS…LYGK and RCRR…ICNF. The segment at residues 186-245 is a DNA-binding region (homeobox); it reads PKRPRTILNAQQRRQFKTAFERSSKPSRKVREQLANETGLSVRVVQVWFQNQRAKIKKLN. Residues 244–297 are disordered; that stretch reads LNKKDSDSGDTFKHGPGSEGRSTEDIRSSDDEEESVINLDADEVETSETSSYTD. A compositionally biased stretch (basic and acidic residues) spans 246–256; sequence KKDSDSGDTFK. Acidic residues predominate over residues 273 to 289; it reads DDEEESVINLDADEVET.

The protein localises to the nucleus. Functionally, transcription factor. Required for the terminal differentiation of sensory- and motor-neurons, especially GABAergic neurons, and for morphological aspects of uterine development. Plays a role in the cell-type-specific regulation of glutamic acid decarboxylase unc-25. Involved in promoting sleep-like behavioral quiescence, acting by modulating expression of transcription factor aptf-1 in the single sleep-active ring interneuron RIS. Plays a role in regulation of RIS differentiation. Required for the functional asymmetry of the ASER and ASEL chemosensory neuron pair, conferring the ability to discriminate sodium from chloride, perhaps by modulating expression of receptor-type guanylate cyclases, such as gcy-5. Involved in regulating postembryonic axon maintenance in the ventral nerve cord, acting in concert with LIM homeobox protein ceh-14, via modulation of expression of immunoglobulin domain zig genes in the interneuron PVT. May play a role in the functions of the excretory gland cell. In Caenorhabditis elegans, this protein is LIM/homeobox protein lim-6.